The primary structure comprises 680 residues: Methionine--tRNA ligase (680 aa).

The 'HIGH' region signature appears at 14–24 (PYANGPIHLGH). Cys-145, Cys-148, Cys-158, and Cys-161 together coordinate Zn(2+). The short motif at 330 to 334 (KMSKS) is the 'KMSKS' region element. Lys-333 provides a ligand contact to ATP. Positions 579 to 680 (DFAKVDFRIA…DGAQPGMRVK (102 aa)) constitute a tRNA-binding domain.

It belongs to the class-I aminoacyl-tRNA synthetase family. MetG type 1 subfamily. In terms of assembly, homodimer. The cofactor is Zn(2+).

It localises to the cytoplasm. It carries out the reaction tRNA(Met) + L-methionine + ATP = L-methionyl-tRNA(Met) + AMP + diphosphate. In terms of biological role, is required not only for elongation of protein synthesis but also for the initiation of all mRNA translation through initiator tRNA(fMet) aminoacylation. This chain is Methionine--tRNA ligase, found in Hydrogenovibrio crunogenus (strain DSM 25203 / XCL-2) (Thiomicrospira crunogena).